The chain runs to 1368 residues: DNA-directed RNA polymerase subunit beta (1368 aa).

The protein belongs to the RNA polymerase beta chain family. In terms of assembly, the RNAP catalytic core consists of 2 alpha, 1 beta, 1 beta' and 1 omega subunit. When a sigma factor is associated with the core the holoenzyme is formed, which can initiate transcription.

The enzyme catalyses RNA(n) + a ribonucleoside 5'-triphosphate = RNA(n+1) + diphosphate. Its function is as follows. DNA-dependent RNA polymerase catalyzes the transcription of DNA into RNA using the four ribonucleoside triphosphates as substrates. The polypeptide is DNA-directed RNA polymerase subunit beta (Ralstonia nicotianae (strain ATCC BAA-1114 / GMI1000) (Ralstonia solanacearum)).